We begin with the raw amino-acid sequence, 451 residues long: Gamma-aminobutyric acid receptor subunit alpha-2 (451 aa).

Residues 1–28 form the signal peptide; that stretch reads MKTKLNIYNMQLLLFVFLVWDPARLVLA. The Extracellular portion of the chain corresponds to 29–249; it reads NIQEDEAKNN…MTAHFHLKRK (221 aa). An N-linked (GlcNAc...) asparagine glycan is attached at N38. R94 is a 4-aminobutanoate binding site. A glycan (N-linked (GlcNAc...) asparagine) is linked at N138. T157 contacts 4-aminobutanoate. Cysteines 166 and 180 form a disulfide. Residues 250 to 270 form a helical membrane-spanning segment; it reads IGYFVIQTYLPCIMTVILSQV. At 271 to 280 the chain is on the cytoplasmic side; sequence SFWLNRESVP. A helical membrane pass occupies residues 281–300; that stretch reads ARTVFGVTTVLTMTTLSISA. Topologically, residues 301-311 are extracellular; the sequence is RNSLPKVAYAT. Residues 312 to 332 traverse the membrane as a helical segment; it reads AMDWFIAVCYAFVFSALIEFA. At 333–420 the chain is on the cytoplasmic side; the sequence is TVNYFTKRGW…FNSVSKIDRM (88 aa). Residues 421–441 form a helical membrane-spanning segment; it reads SRIVFPVLFGTFNLVYWATYL. The Extracellular segment spans residues 442-451; sequence NREPVLGVSP.

The protein belongs to the ligand-gated ion channel (TC 1.A.9) family. Gamma-aminobutyric acid receptor (TC 1.A.9.5) subfamily. GABRA2 sub-subfamily. As to quaternary structure, heteropentamer, formed by a combination of alpha (GABRA1-6), beta (GABRB1-3), gamma (GABRG1-3), delta (GABRD), epsilon (GABRE), rho (GABRR1-3), pi (GABRP) and theta (GABRQ) subunits, each subunit exhibiting distinct physiological and pharmacological properties. Interacts with UBQLN1. Interacts with KIF21B. Interacts with LHFPL4. Interacts with SHISA7; interaction leads to the regulation of GABA(A) receptor trafficking, channel deactivation kinetics and pharmacology. In terms of processing, glycosylated.

Its subcellular location is the postsynaptic cell membrane. The protein resides in the cell membrane. It is found in the cytoplasmic vesicle membrane. The protein localises to the cell projection. It localises to the dendrite. It catalyses the reaction chloride(in) = chloride(out). With respect to regulation, activated by pentobarbital. Inhibited by the antagonist bicuculline. Alpha subunit of the heteropentameric ligand-gated chloride channel gated by gamma-aminobutyric acid (GABA), a major inhibitory neurotransmitter in the brain. GABA-gated chloride channels, also named GABA(A) receptors (GABAAR), consist of five subunits arranged around a central pore and contain GABA active binding site(s) located at the alpha and beta subunit interface(s). When activated by GABA, GABAARs selectively allow the flow of chloride anions across the cell membrane down their electrochemical gradient. Chloride influx into the postsynaptic neuron following GABAAR opening decreases the neuron ability to generate a new action potential, thereby reducing nerve transmission. The alpha-2 subunit exhibits synaptogenic activity together with beta-2 and very little to no activity together with beta-3, the gamma-2 subunit being necessary but not sufficient to induce rapid synaptic contacts formation. This Pongo abelii (Sumatran orangutan) protein is Gamma-aminobutyric acid receptor subunit alpha-2 (GABRA2).